Reading from the N-terminus, the 483-residue chain is MAPEGDQRVGSGDSDFVVVANRLPIDMERLPDGSTSIKRSPGGLVTALEPLLRKRRGAWIGWAGIPDSPEDPIEEDGLQLYPVALSADDVADYYEGFSNATLWPLYHDLIVKPIYHRKWWDRYVEVNRRFAEATARAAAQGATVWVQDYQLQLVPKMLRMLRPDLTIGFFLHIPFPPVELFMQMPWRTEIIEGLLGADLVGFHLPGGAQNFLYLSRRLTGANTSRASVGVRSRFGEVQVGFRTVKVGAFPISIDSAELDSKARNRSVRQRAREIRNELGNPRKILLGVDRLDYTKGINVRLEAFSELLEDGRVDRNDTVLIQLATPSRERVESYIAMREDIERQVGHINGEFGDVGHPIVHYLHRPVPRDELIAFFVAADVMLVTPLRDGMNLVAKEYVACRSDLGGALVLSEFTGAAAELRQAYLANPHHLEGVKDAIEAALNQDPEEGRRRMRALRRQVLAHDVDRWARAFLDALADTKSA.

Residue Arg22 coordinates D-glucose 6-phosphate. 42-43 (GG) is a binding site for UDP-alpha-D-glucose. The D-glucose 6-phosphate site is built by Tyr94 and Asp148. Positions 290 and 295 each coordinate UDP-alpha-D-glucose. Residue Arg328 coordinates D-glucose 6-phosphate. 393–397 (LVAKE) provides a ligand contact to UDP-alpha-D-glucose.

This sequence belongs to the glycosyltransferase 20 family. In terms of assembly, homotetramer.

It carries out the reaction ADP-alpha-D-glucose + D-glucose 6-phosphate = alpha,alpha-trehalose 6-phosphate + ADP + H(+). The enzyme catalyses CDP-alpha-D-glucose + D-glucose 6-phosphate = alpha,alpha-trehalose 6-phosphate + CDP + H(+). The catalysed reaction is GDP-alpha-D-glucose + D-glucose 6-phosphate = alpha,alpha-trehalose 6-phosphate + GDP + H(+). It catalyses the reaction TDP-alpha-D-glucose + D-glucose 6-phosphate = 5-methyl-UDP + alpha,alpha-trehalose 6-phosphate + H(+). It carries out the reaction D-glucose 6-phosphate + UDP-alpha-D-glucose = alpha,alpha-trehalose 6-phosphate + UDP + H(+). Its pathway is glycan biosynthesis; trehalose biosynthesis. Functionally, probably involved in the osmoprotection via the biosynthesis of trehalose and in the production of glycogen and alpha-glucan via the TreS-Pep2 branch involved in the biosynthesis of maltose-1-phosphate (M1P). Catalyzes the transfer of glucose from UDP-glucose (UDP-Glc) to D-glucose 6-phosphate (Glc-6-P) to form trehalose-6-phosphate. Probably also able to use ADP-Glc, CDP-Glc, GDP-Glc and TDP-Glc as glucosyl donors. This is Trehalose-6-phosphate synthase from Mycobacterium sp. (strain JLS).